A 134-amino-acid polypeptide reads, in one-letter code: Large ribosomal subunit protein eL32 (134 aa).

This sequence belongs to the eukaryotic ribosomal protein eL32 family.

This chain is Large ribosomal subunit protein eL32 (RpL32), found in Apis mellifera (Honeybee).